A 149-amino-acid chain; its full sequence is Deoxyuridine 5'-triphosphate nucleotidohydrolase (149 aa).

Substrate contacts are provided by residues 68-70 (RSG), Asn81, 85-87 (TID), and Lys95.

Belongs to the dUTPase family. Mg(2+) is required as a cofactor.

The enzyme catalyses dUTP + H2O = dUMP + diphosphate + H(+). Its pathway is pyrimidine metabolism; dUMP biosynthesis; dUMP from dCTP (dUTP route): step 2/2. In terms of biological role, this enzyme is involved in nucleotide metabolism: it produces dUMP, the immediate precursor of thymidine nucleotides and it decreases the intracellular concentration of dUTP so that uracil cannot be incorporated into DNA. This Bdellovibrio bacteriovorus (strain ATCC 15356 / DSM 50701 / NCIMB 9529 / HD100) protein is Deoxyuridine 5'-triphosphate nucleotidohydrolase.